Here is a 282-residue protein sequence, read N- to C-terminus: Phosphate import ATP-binding protein PstB (282 aa).

A compositionally biased stretch (polar residues) spans 1 to 25 (MKALNANISTMSEVSRSATPQSDSP). Residues 1–26 (MKALNANISTMSEVSRSATPQSDSPA) are disordered. In terms of domain architecture, ABC transporter spans 36–277 (IRIANFNAWY…PQEKRTDDYV (242 aa)). 68 to 75 (GPSGCGKS) is an ATP binding site.

Belongs to the ABC transporter superfamily. Phosphate importer (TC 3.A.1.7) family. In terms of assembly, the complex is composed of two ATP-binding proteins (PstB), two transmembrane proteins (PstC and PstA) and a solute-binding protein (PstS).

The protein resides in the cell inner membrane. It carries out the reaction phosphate(out) + ATP + H2O = ADP + 2 phosphate(in) + H(+). Functionally, part of the ABC transporter complex PstSACB involved in phosphate import. Responsible for energy coupling to the transport system. This chain is Phosphate import ATP-binding protein PstB, found in Rhodopirellula baltica (strain DSM 10527 / NCIMB 13988 / SH1).